We begin with the raw amino-acid sequence, 276 residues long: Undecaprenyl-diphosphatase 1 (276 aa).

Transmembrane regions (helical) follow at residues Met-85–Ile-105, Val-108–Trp-128, Val-187–Glu-207, Val-217–Cys-237, and Phe-253–Ile-273.

This sequence belongs to the UppP family.

Its subcellular location is the cell inner membrane. The catalysed reaction is di-trans,octa-cis-undecaprenyl diphosphate + H2O = di-trans,octa-cis-undecaprenyl phosphate + phosphate + H(+). Functionally, catalyzes the dephosphorylation of undecaprenyl diphosphate (UPP). Confers resistance to bacitracin. This is Undecaprenyl-diphosphatase 1 from Burkholderia thailandensis (strain ATCC 700388 / DSM 13276 / CCUG 48851 / CIP 106301 / E264).